We begin with the raw amino-acid sequence, 501 residues long: Calcium-dependent protein kinase 4 (501 aa).

Residues 25-283 (YLLGKKLGQG…AHEALCHPWI (259 aa)) form the Protein kinase domain. ATP contacts are provided by residues 31 to 39 (LGQGQFGTT) and K54. Catalysis depends on D149, which acts as the Proton acceptor. Phosphoserine is present on S189. Residues 289–319 (APDKPLDPAVLSRLKQFSQMNKIKKMALRVI) form an autoinhibitory domain region. EF-hand domains follow at residues 326-361 (EEIG…VGSE), 362-397 (LMES…INKM), 398-433 (EREE…FGLC), and 437-467 (LDDM…GDGV). D339, D341, S343, T345, E350, D375, D377, S379, T381, E386, D411, D413, S415, Y417, E422, D445, D447, D449, K451, and E456 together coordinate Ca(2+).

Belongs to the protein kinase superfamily. Ser/Thr protein kinase family. CDPK subfamily. Interacts with Di19.

It is found in the cytoplasm. It localises to the nucleus. The enzyme catalyses L-seryl-[protein] + ATP = O-phospho-L-seryl-[protein] + ADP + H(+). It catalyses the reaction L-threonyl-[protein] + ATP = O-phospho-L-threonyl-[protein] + ADP + H(+). Activated by calcium. Autophosphorylation may play an important role in the regulation of the kinase activity. May play a role in signal transduction pathways that involve calcium as a second messenger. Functions as a regulator of the calcium-mediated abscisic acid (ABA) signaling pathway. Phosphorylates ABA-responsive transcription factors ABF1 and ABF4 in vitro. Phosphorylates the nuclear zinc finger Di19 in vitro. The polypeptide is Calcium-dependent protein kinase 4 (CPK4) (Arabidopsis thaliana (Mouse-ear cress)).